Here is a 622-residue protein sequence, read N- to C-terminus: 1,4-alpha-glucan branching enzyme GlgB (622 aa).

Catalysis depends on Asp300, which acts as the Nucleophile. Glu351 acts as the Proton donor in catalysis.

This sequence belongs to the glycosyl hydrolase 13 family. GlgB subfamily. Monomer.

The enzyme catalyses Transfers a segment of a (1-&gt;4)-alpha-D-glucan chain to a primary hydroxy group in a similar glucan chain.. It functions in the pathway glycan biosynthesis; glycogen biosynthesis. Its function is as follows. Catalyzes the formation of the alpha-1,6-glucosidic linkages in glycogen by scission of a 1,4-alpha-linked oligosaccharide from growing alpha-1,4-glucan chains and the subsequent attachment of the oligosaccharide to the alpha-1,6 position. The sequence is that of 1,4-alpha-glucan branching enzyme GlgB from Streptococcus agalactiae serotype III (strain NEM316).